The primary structure comprises 259 residues: uncharacterized protein (259 aa).

The protein to M.thermoautotrophicum MTH738.

This is an uncharacterized protein from Methanocaldococcus jannaschii (strain ATCC 43067 / DSM 2661 / JAL-1 / JCM 10045 / NBRC 100440) (Methanococcus jannaschii).